An 88-amino-acid chain; its full sequence is Cell division topological specificity factor (88 aa).

This sequence belongs to the MinE family.

Prevents the cell division inhibition by proteins MinC and MinD at internal division sites while permitting inhibition at polar sites. This ensures cell division at the proper site by restricting the formation of a division septum at the midpoint of the long axis of the cell. This chain is Cell division topological specificity factor, found in Escherichia fergusonii (strain ATCC 35469 / DSM 13698 / CCUG 18766 / IAM 14443 / JCM 21226 / LMG 7866 / NBRC 102419 / NCTC 12128 / CDC 0568-73).